The sequence spans 151 residues: Small ribosomal subunit protein uS19 (151 aa).

Residues M1 to T23 form a disordered region. The segment covering S11–T23 has biased composition (basic residues).

This sequence belongs to the universal ribosomal protein uS19 family.

In terms of biological role, protein S19 forms a complex with S13 that binds strongly to the 16S ribosomal RNA. The polypeptide is Small ribosomal subunit protein uS19 (rps19) (Thermoplasma volcanium (strain ATCC 51530 / DSM 4299 / JCM 9571 / NBRC 15438 / GSS1)).